The primary structure comprises 94 residues: Small ribosomal subunit protein uS19 (94 aa).

A disordered region spans residues 75–94 (SHTRTFKGHAGDKKAAGSKR). Over residues 83–94 (HAGDKKAAGSKR) the composition is skewed to basic and acidic residues.

It belongs to the universal ribosomal protein uS19 family.

Functionally, protein S19 forms a complex with S13 that binds strongly to the 16S ribosomal RNA. The protein is Small ribosomal subunit protein uS19 of Nitrosomonas europaea (strain ATCC 19718 / CIP 103999 / KCTC 2705 / NBRC 14298).